The chain runs to 474 residues: P2X purinoceptor 2 (474 aa).

The Cytoplasmic segment spans residues 1 to 42 (MAATHPKAPTAQRLRQGWSAFWDYETPKVIVVRNRPLGVVYR). The chain crosses the membrane as a helical span at residues 43–60 (AVQLLILLYFVWYVFIVQ). The Extracellular segment spans residues 61–333 (KSYQDSETGP…IVHGQAGKFS (273 aa)). ATP contacts are provided by Lys-77 and Lys-79. 3 disulfide bridges follow: Cys-121–Cys-172, Cys-132–Cys-155, and Cys-138–Cys-166. Asn-129 is a glycosylation site (N-linked (GlcNAc...) asparagine). Asn-190 is a glycosylation site (N-linked (GlcNAc...) asparagine). Thr-192 contributes to the ATP binding site. The cysteines at positions 222 and 232 are disulfide-linked. The N-linked (GlcNAc...) asparagine glycan is linked to Asn-247. Cys-266 and Cys-275 form a disulfide bridge. The ATP site is built by Ser-292, Asn-296, and Arg-298. Asn-306 carries an N-linked (GlcNAc...) asparagine glycan. Lys-315 provides a ligand contact to ATP. Residues 316 to 329 (AYGIRIDVIVHGQA) form a pore-forming motif region. The chain crosses the membrane as a helical span at residues 334 to 354 (LIPTIINLATALTSIGVGSFL). Residues 355–474 (CDWILLTFMN…PTDPKGLAQL (120 aa)) lie on the Cytoplasmic side of the membrane. The tract at residues 445-474 (PDRCVGQGLPSSESPLQDSTPTDPKGLAQL) is disordered. The span at 453–466 (LPSSESPLQDSTPT) shows a compositional bias: polar residues.

This sequence belongs to the P2X receptor family. As to quaternary structure, homotrimer and heterotrimer; functional P2XRs are organized as homomeric and heteromeric trimers. Homotrimer. Forms heterodimer with P2RX1. Forms heterotrimer with P2RX6. Forms heterotrimer with P2RX3. In terms of tissue distribution, express in organ of Corti.

It localises to the cell membrane. It carries out the reaction Ca(2+)(in) = Ca(2+)(out). The catalysed reaction is K(+)(in) = K(+)(out). The enzyme catalyses Na(+)(in) = Na(+)(out). Its activity is regulated as follows. Fast activation by external ATP. Exhibits slow desensitization during prolonged ATP activation. Not sensitive to the ATP agonist:alpha/beta-methylene-ATP. Its function is as follows. ATP-gated nonselective transmembrane cation channel permeable to potassium, sodium and calcium. Activation by extracellular ATP induces a variety of cellular responses, such as excitatory postsynaptic responses in sensory neurons, neuromuscular junctions (NMJ) formation, hearing, perception of taste and peristalsis. In the inner ear, regulates sound transduction and auditory neurotransmission, outer hair cell electromotility, inner ear gap junctions, and K(+) recycling. Mediates synaptic transmission between neurons and from neurons to smooth muscle. The sequence is that of P2X purinoceptor 2 (P2RX2) from Cavia porcellus (Guinea pig).